Here is a 288-residue protein sequence, read N- to C-terminus: Bifunctional protein FolD 2 (288 aa).

NADP(+) contacts are provided by residues Gly166–Ser168 and Ser191.

This sequence belongs to the tetrahydrofolate dehydrogenase/cyclohydrolase family. Homodimer.

The catalysed reaction is (6R)-5,10-methylene-5,6,7,8-tetrahydrofolate + NADP(+) = (6R)-5,10-methenyltetrahydrofolate + NADPH. The enzyme catalyses (6R)-5,10-methenyltetrahydrofolate + H2O = (6R)-10-formyltetrahydrofolate + H(+). It participates in one-carbon metabolism; tetrahydrofolate interconversion. Catalyzes the oxidation of 5,10-methylenetetrahydrofolate to 5,10-methenyltetrahydrofolate and then the hydrolysis of 5,10-methenyltetrahydrofolate to 10-formyltetrahydrofolate. The polypeptide is Bifunctional protein FolD 2 (Myxococcus xanthus (strain DK1622)).